A 357-amino-acid chain; its full sequence is Acyl-CoA Delta12-desaturase (357 aa).

2 helical membrane-spanning segments follow: residues 49–69 (VLWF…IFAS) and 72–92 (IYTT…ITAG). Positions 94, 99, 131, 134, and 135 each coordinate Fe cation. A Histidine box-1 motif is present at residues 94 to 99 (HRLWAH). The short motif at 131–135 (HRVHH) is the Histidine box-2 element. Transmembrane regions (helical) follow at residues 195-215 (LVPF…WGET) and 223-245 (STMF…AHMW). Fe cation is bound by residues His243, His272, His275, and His276. Residues 272–276 (HNFHH) carry the Histidine box-3 motif.

It belongs to the fatty acid desaturase type 1 family. It depends on Fe(2+) as a cofactor.

The protein localises to the membrane. The enzyme catalyses (9Z)-octadecenoyl-CoA + 2 Fe(II)-[cytochrome b5] + O2 + 2 H(+) = (9Z,12Z)-octadecadienoyl-CoA + 2 Fe(III)-[cytochrome b5] + 2 H2O. It carries out the reaction (9Z)-hexadecenoyl-CoA + 2 Fe(II)-[cytochrome b5] + O2 + 2 H(+) = (9Z,12Z)-hexadecadienoyl-CoA + 2 Fe(III)-[cytochrome b5] + 2 H2O. It catalyses the reaction hexadecanoyl-CoA + 2 Fe(II)-[cytochrome b5] + O2 + 2 H(+) = (9Z)-hexadecenoyl-CoA + 2 Fe(III)-[cytochrome b5] + 2 H2O. Functionally, catalyzes the formation of a Delta12 double bond, acting on monounsaturated fatty acyl substrates like palmitoleoyl-CoA ((9Z)-hexadecenoyl-CoA) and oleoyl-CoA ((9Z)-octadecenoyl-CoA) with higher desaturation activity on (9Z)-octadecenoyl-CoA than (9Z)-hexadecenoyl-CoA. Requires preexisting cis double bond at the Delta9 position of fatty acyls to be able to insert the Delta12 double bond. Delta12-desaturation of (9Z)-octadecenoyl-CoA in insects produces (9Z,12Z)-octadecadienoyl-CoA (linoleoyl-CoA) which may be used to supply precursors of crucial mediators of immunity and reproduction and other essential functions. Can also catalyze Delta9-desaturation on saturated fatty acyl substrates like palmitoyl-CoA (hexadecanoyl-CoA) but with lower efficiency. The polypeptide is Acyl-CoA Delta12-desaturase (Acheta domesticus (House cricket)).